Here is a 501-residue protein sequence, read N- to C-terminus: Beta-secretase 1 (501 aa).

Residues 1–21 (MAPALRWLLLWVGSGMLPAQG) form the signal peptide. The propeptide occupies 22–45 (THLGIRLPLRSGLAGPPLGLRLPR). At 22–457 (THLGIRLPLR…PQTDESTLMT (436 aa)) the chain is on the extracellular side. One can recognise a Peptidase A1 domain in the interval 75-416 (YYVEMTVGSP…DRARKRIGFA (342 aa)). The active site involves Asp-93. An N6-acetyllysine modification is found at Lys-126. Residues Asn-153, Asn-172, and Asn-223 are each glycosylated (N-linked (GlcNAc...) asparagine). 3 disulfides stabilise this stretch: Cys-216-Cys-420, Cys-278-Cys-443, and Cys-330-Cys-380. Lys-275, Lys-279, and Lys-285 each carry N6-acetyllysine. Asp-289 is a catalytic residue. N6-acetyllysine occurs at positions 299, 300, and 307. Residue Asn-354 is glycosylated (N-linked (GlcNAc...) asparagine). Residues 458–478 (IAYVMAAICALFMLPLCLMVC) traverse the membrane as a helical segment. 4 S-palmitoyl cysteine lipidation sites follow: Cys-474, Cys-478, Cys-482, and Cys-485. At 479-501 (QWRCLRCLRHQHDDFADDISLLK) the chain is on the cytoplasmic side. The segment at 479–501 (QWRCLRCLRHQHDDFADDISLLK) is interaction with RTN3. A DXXLL motif is present at residues 496 to 500 (DISLL). Ser-498 is modified (phosphoserine). Residue Lys-501 forms a Glycyl lysine isopeptide (Lys-Gly) (interchain with G-Cter in ubiquitin) linkage.

Belongs to the peptidase A1 family. Monomer. Interacts (via DXXLL motif) with GGA1, GGA2 and GGA3 (via their VHS domain); the interaction highly increases when BACE1 is phosphorylated at Ser-498. Interacts with RTN1; RTN2; RTN3 and RTN4; the interaction leads to inhibition of amyloid precursor protein processing. Interacts with SNX6. Interacts with PCSK9. Interacts with NAT8 and NAT8B. Interacts with BIN1. Interacts (via extracellular domain) with ADAM10 (via extracellular domain). Interacts with SORL1; this interaction may affect binding with APP and hence reduce APP cleavage. Interacts with NRDC AND NRG1. In terms of processing, palmitoylation mediates lipid raft localization. Post-translationally, acetylated in the endoplasmic reticulum at Lys-126, Lys-275, Lys-279, Lys-285, Lys-299, Lys-300 and Lys-307. Acetylation by NAT8 and NAT8B is transient and deacetylation probably occurs in the Golgi. Acetylation regulates the maturation, the transport to the plasma membrane, the stability and the expression of the protein. Ubiquitinated at Lys-501, ubiquitination leads to lysosomal degradation. Monoubiquitinated and 'Lys-63'-linked polyubitinated. Deubiquitnated by USP8; inhibits lysosomal degradation. In terms of processing, phosphorylation at Ser-498 is required for interaction with GGA1 and retrograded transport from endosomal compartments to the trans-Golgi network. Non-phosphorylated BACE1 enters a direct recycling route to the cell surface. Post-translationally, N-Glycosylated. Addition of a bisecting N-acetylglucosamine by MGAT3 blocks lysosomal targeting, further degradation and is required for maintaining stability under stress conditions.

It is found in the cell membrane. It localises to the golgi apparatus. Its subcellular location is the trans-Golgi network. The protein resides in the endoplasmic reticulum. The protein localises to the endosome. It is found in the cell surface. It localises to the cytoplasmic vesicle membrane. Its subcellular location is the membrane raft. The protein resides in the lysosome. The protein localises to the late endosome. It is found in the early endosome. It localises to the recycling endosome. Its subcellular location is the cell projection. The protein resides in the axon. The protein localises to the dendrite. The enzyme catalyses Broad endopeptidase specificity. Cleaves Glu-Val-Asn-Leu-|-Asp-Ala-Glu-Phe in the Swedish variant of Alzheimer's amyloid precursor protein.. Inhibited by RTN3 and RTN4. Functionally, responsible for the proteolytic processing of the amyloid precursor protein (APP). Cleaves at the N-terminus of the A-beta peptide sequence, between residues 671 and 672 of APP, leads to the generation and extracellular release of beta-cleaved soluble APP, and a corresponding cell-associated C-terminal fragment which is later released by gamma-secretase. Cleaves CHL1. The chain is Beta-secretase 1 (Bace1) from Rattus norvegicus (Rat).